Consider the following 275-residue polypeptide: NH(3)-dependent NAD(+) synthetase (275 aa).

46 to 53 is an ATP binding site; that stretch reads GISGGQDS. Residue D52 participates in Mg(2+) binding. R140 contributes to the deamido-NAD(+) binding site. Position 160 (T160) interacts with ATP. E165 serves as a coordination point for Mg(2+). The deamido-NAD(+) site is built by K173 and D180. Residues K189 and T211 each contribute to the ATP site. Deamido-NAD(+) is bound at residue 260 to 261; the sequence is HK.

It belongs to the NAD synthetase family. Homodimer.

It carries out the reaction deamido-NAD(+) + NH4(+) + ATP = AMP + diphosphate + NAD(+) + H(+). Its pathway is cofactor biosynthesis; NAD(+) biosynthesis; NAD(+) from deamido-NAD(+) (ammonia route): step 1/1. In terms of biological role, catalyzes the ATP-dependent amidation of deamido-NAD to form NAD. Uses ammonia as a nitrogen source. The protein is NH(3)-dependent NAD(+) synthetase of Salmonella heidelberg (strain SL476).